A 316-amino-acid chain; its full sequence is Arginase-1 (316 aa).

The interval 1–26 (MAKERHSVGVIGAPFSKGQPRRGVEE) is disordered. The Mn(2+) site is built by His-101, Asp-124, His-126, and Asp-128. Substrate is bound by residues 126–130 (HADIN), 137–139 (CGN), and Asp-183. 2 residues coordinate Mn(2+): Asp-232 and Asp-234. A substrate-binding site is contributed by Thr-246.

It belongs to the arginase family. In terms of assembly, homotrimer. Mn(2+) is required as a cofactor. Strongest expression in liver.

It catalyses the reaction L-arginine + H2O = urea + L-ornithine. Its pathway is nitrogen metabolism; urea cycle; L-ornithine and urea from L-arginine: step 1/1. The protein is Arginase-1 (arg1) of Xenopus laevis (African clawed frog).